We begin with the raw amino-acid sequence, 311 residues long: tRNA-cytidine(32) 2-sulfurtransferase (311 aa).

Residues 47–52 (SGGKDS) carry the PP-loop motif motif. Cysteine 122, cysteine 125, and cysteine 213 together coordinate [4Fe-4S] cluster.

The protein belongs to the TtcA family. As to quaternary structure, homodimer. It depends on Mg(2+) as a cofactor. Requires [4Fe-4S] cluster as cofactor.

It is found in the cytoplasm. It catalyses the reaction cytidine(32) in tRNA + S-sulfanyl-L-cysteinyl-[cysteine desulfurase] + AH2 + ATP = 2-thiocytidine(32) in tRNA + L-cysteinyl-[cysteine desulfurase] + A + AMP + diphosphate + H(+). It functions in the pathway tRNA modification. Its function is as follows. Catalyzes the ATP-dependent 2-thiolation of cytidine in position 32 of tRNA, to form 2-thiocytidine (s(2)C32). The sulfur atoms are provided by the cysteine/cysteine desulfurase (IscS) system. The chain is tRNA-cytidine(32) 2-sulfurtransferase from Enterobacter sp. (strain 638).